The following is a 447-amino-acid chain: Polyamine export protein (447 aa).

Over 1–4 the chain is Cytoplasmic; that stretch reads MLNS. In terms of domain architecture, CNNM transmembrane spans 1-197; it reads MLNSILVILC…ALAGVLRKQE (197 aa). A helical membrane pass occupies residues 5–25; it reads ILVILCLIAVSAFFSMSEISL. Topologically, residues 26–54 are periplasmic; it reads AASRKIKLKLLADEGNINAQRVLNMQENP. A helical membrane pass occupies residues 55–75; the sequence is GMFFTVVQIGLNAVAILGGIV. Topologically, residues 76–99 are cytoplasmic; sequence GDAAFSPAFHSLFSRYMSAELSEQ. A helical transmembrane segment spans residues 100 to 120; it reads LSFILSFSLVTGMFILFADLT. At 121–141 the chain is on the periplasmic side; the sequence is PKRIGMIAPEAVALRIINPMR. Residues 142–162 form a helical membrane-spanning segment; the sequence is FCLYVCTPLVWFFNGLANIIF. Over 163–447 the chain is Cytoplasmic; the sequence is RIFKLPMVRK…DAKDKEESVA (285 aa). CBS domains are found at residues 216 to 275 and 282 to 343; these read MTPR…NQSL and QIRN…GLEE.

This sequence belongs to the UPF0053 family. PaeA subfamily.

The protein localises to the cell inner membrane. Its function is as follows. Involved in cadaverine and putrescine tolerance in stationary phase. May facilitate the efflux of both cadaverine and putrescine from the cytoplasm, reducing potentially toxic levels under certain stress conditions. The sequence is that of Polyamine export protein from Escherichia coli O157:H7.